A 414-amino-acid polypeptide reads, in one-letter code: MAALRYAGLDDTDSEDELPPGWEERTTKDGWVYYANHTEEKTQWEHPKTGKRKRVAGDLPYGWEQETDENGQVFFVDHINKRTTYLDPRLAFTVDDNPTKPTTRQRYDGSTTAMEILQGRDFTGKVVVVTGANSGIGFETAKSFALHGAHVILACRNMARASEAVSRILEEWHKAKVEAMTLDLALLRSVQHFAEAFKAKNVPLHVLVCNAATFALPWSLTKDGLETTFQVNHLGHFYLVQLLQDVLCRSAPARVIVVSSESHRFTDINDSLGKLDFSRLSPTKNDYWAMLAYNRSKLCNILFSNELHRRLSPRGVTSNAVHPGNMMYSNIHRSWWVYTLLFTLARPFTKSMQQGAATTVYCAAVPELEGLGGMYFNNCCRCMPSPEAQSEETARTLWALSERLIQERLGSQSG.

The interval 1–23 (MAALRYAGLDDTDSEDELPPGWE) is disordered. Thr-12 bears the Phosphothreonine mark. Ser-14 is modified (phosphoserine). The WW 1 domain occupies 16–49 (DELPPGWEERTTKDGWVYYANHTEEKTQWEHPKT). Tyr-33 carries the phosphotyrosine modification. Positions 50-55 (GKRKRV) match the Nuclear localization signal motif. The region spanning 57-90 (GDLPYGWEQETDENGQVFFVDHINKRTTYLDPRL) is the WW 2 domain. The tract at residues 125-414 (KVVVVTGANS…IQERLGSQSG (290 aa)) is interaction with MAPT. Residue 131–137 (GANSGIG) participates in NADP(+) binding. Residues 209–273 (CNAATFALPW…RFTDINDSLG (65 aa)) are mediates targeting to the mitochondria. Substrate is bound at residue Ser-260. Position 287 is a phosphotyrosine; by TNK2 (Tyr-287). The active-site Proton acceptor is the Tyr-293.

It belongs to the short-chain dehydrogenases/reductases (SDR) family. As to quaternary structure, interacts with TP53, p73/TP73 and MAPK8. Interacts with MAPT/TAU, RUNX2 and HYAL2. Forms a ternary complex with TP53 and MDM2. Interacts with ERBB4, LITAF and WBP1. Interacts with DVL1, DVL2 and DVL3. May interact with FAM189B and SCOTIN. Interacts with TNK2. Interacts with TMEM207. Interacts (via WW domain) with VOPP1. In terms of processing, phosphorylated upon genotoxic stress. Phosphorylation of Tyr-33 regulates interaction with TP53, TP73 and MAPK8. May also regulate proapoptotic activity. Phosphorylation by TNK2 is associated with polyubiquitination and degradation. Post-translationally, ubiquitinated when phosphorylated by TNK2, leading to its degradation. Widely expressed. Strongly expressed in testis, prostate, and ovary. Overexpressed in cancer cell lines. Isoform 5 and isoform 6 may only be expressed in tumor cell lines.

Its subcellular location is the cytoplasm. The protein resides in the nucleus. The protein localises to the mitochondrion. It localises to the golgi apparatus. It is found in the lysosome. In terms of biological role, putative oxidoreductase. Acts as a tumor suppressor and plays a role in apoptosis. Required for normal bone development. May function synergistically with p53/TP53 to control genotoxic stress-induced cell death. Plays a role in TGFB1 signaling and TGFB1-mediated cell death. May also play a role in tumor necrosis factor (TNF)-mediated cell death. Inhibits Wnt signaling, probably by sequestering DVL2 in the cytoplasm. This is WW domain-containing oxidoreductase (WWOX) from Homo sapiens (Human).